A 245-amino-acid polypeptide reads, in one-letter code: 1-(5-phosphoribosyl)-5-[(5-phosphoribosylamino)methylideneamino] imidazole-4-carboxamide isomerase (245 aa).

Residue Asp-7 is the Proton acceptor of the active site. The active-site Proton donor is the Asp-129.

It belongs to the HisA/HisF family.

The protein resides in the cytoplasm. The enzyme catalyses 1-(5-phospho-beta-D-ribosyl)-5-[(5-phospho-beta-D-ribosylamino)methylideneamino]imidazole-4-carboxamide = 5-[(5-phospho-1-deoxy-D-ribulos-1-ylimino)methylamino]-1-(5-phospho-beta-D-ribosyl)imidazole-4-carboxamide. It participates in amino-acid biosynthesis; L-histidine biosynthesis; L-histidine from 5-phospho-alpha-D-ribose 1-diphosphate: step 4/9. This is 1-(5-phosphoribosyl)-5-[(5-phosphoribosylamino)methylideneamino] imidazole-4-carboxamide isomerase from Pectobacterium carotovorum subsp. carotovorum (strain PC1).